We begin with the raw amino-acid sequence, 165 residues long: Phosphopantetheine adenylyltransferase (165 aa).

This sequence belongs to the eukaryotic CoaD family.

It localises to the cytoplasm. It catalyses the reaction (R)-4'-phosphopantetheine + ATP + H(+) = 3'-dephospho-CoA + diphosphate. Its pathway is cofactor biosynthesis; coenzyme A biosynthesis. Functionally, reversibly transfers an adenylyl group from ATP to 4'-phosphopantetheine, yielding dephospho-CoA (dPCoA) and pyrophosphate. This is Phosphopantetheine adenylyltransferase from Thermococcus kodakarensis (strain ATCC BAA-918 / JCM 12380 / KOD1) (Pyrococcus kodakaraensis (strain KOD1)).